Reading from the N-terminus, the 593-residue chain is Elongation factor 4 (593 aa).

One can recognise a tr-type G domain in the interval 2-181 (KNIRNFCIIA…AVVERIPHPT (180 aa)). GTP-binding positions include 14–19 (DHGKST) and 128–131 (NKCD).

Belongs to the TRAFAC class translation factor GTPase superfamily. Classic translation factor GTPase family. LepA subfamily.

The protein localises to the cell inner membrane. The enzyme catalyses GTP + H2O = GDP + phosphate + H(+). Required for accurate and efficient protein synthesis under certain stress conditions. May act as a fidelity factor of the translation reaction, by catalyzing a one-codon backward translocation of tRNAs on improperly translocated ribosomes. Back-translocation proceeds from a post-translocation (POST) complex to a pre-translocation (PRE) complex, thus giving elongation factor G a second chance to translocate the tRNAs correctly. Binds to ribosomes in a GTP-dependent manner. The chain is Elongation factor 4 from Phocaeicola vulgatus (strain ATCC 8482 / DSM 1447 / JCM 5826 / CCUG 4940 / NBRC 14291 / NCTC 11154) (Bacteroides vulgatus).